Reading from the N-terminus, the 165-residue chain is Pyruvoyl-dependent arginine decarboxylase 1 (165 aa).

Pyruvic acid (Ser) is present on Ser45.

It belongs to the PdaD family. The cofactor is pyruvate.

It carries out the reaction L-arginine + H(+) = agmatine + CO2. In Methanosarcina acetivorans (strain ATCC 35395 / DSM 2834 / JCM 12185 / C2A), this protein is Pyruvoyl-dependent arginine decarboxylase 1 (pdaD1).